The chain runs to 419 residues: Voltage-gated potassium channel subunit beta-1 (419 aa).

The segment at 1-51 is disordered; the sequence is MLAARTGAAGSQIAEESSKLRKQAAFSGGSKDRSPKKASENVKDSSLSPSG. Residues 30–43 show a composition bias toward basic and acidic residues; that stretch reads SKDRSPKKASENVK. NADP(+) contacts are provided by Thr108, Trp109, Gln115, and Asp137. Tyr142 (proton donor/acceptor) is an active-site residue. Residues Asn210, Ser240, Arg241, Gln266, Trp295, Ser296, Pro297, Leu298, Ala299, Cys300, Lys306, Arg316, Gly375, Ser377, Gln381, Glu384, and Asn385 each contribute to the NADP(+) site.

It belongs to the shaker potassium channel beta subunit family. In terms of assembly, homotetramer. Interaction with tetrameric potassium channel alpha subunits gives rise to a heterooctamer. Identified in potassium channel complexes containing KCNA1, KCNA2, KCNA4, KCNA5, KCNA6, KCNAB1 and KCNAB2. Part of a complex containing KCNA1, KCNA4 and LGI1; interaction with LGI1 inhibits down-regulation of KCNA1 channel activity. Interacts with the dimer formed by GNB1 and GNG2; this enhances KCNA1 binding. Interacts with SQSTM1. In terms of tissue distribution, detected in portal vein myocytes (at protein level).

Its subcellular location is the cytoplasm. It localises to the membrane. It is found in the cell membrane. It carries out the reaction a primary alcohol + NADP(+) = an aldehyde + NADPH + H(+). It catalyses the reaction a secondary alcohol + NADP(+) = a ketone + NADPH + H(+). In terms of biological role, regulatory subunit of the voltage-gated potassium (Kv) channels composed of pore-forming and potassium-conducting alpha subunits and of regulatory beta subunits. The beta-1/KCNAB1 cytoplasmic subunit mediates closure of delayed rectifier potassium channels by physically obstructing the pore via its N-terminal domain and increases the speed of channel closure for other family members. Promotes the inactivation of KCNA1, KCNA2, KCNA4, KCNA5 and KCNA6 alpha subunit-containing channels. Displays nicotinamide adenine dinucleotide phosphate (NADPH)-dependent aldoketoreductase activity by catalyzing the NADPH-dependent reduction of a variety of endogenous aldehydes and ketones. The binding of NADPH is required for efficient down-regulation of potassium channel activity. Oxidation of the bound NADPH restrains N-terminal domain from blocking the channel, thereby decreasing N-type inactivation of potassium channel activity. This chain is Voltage-gated potassium channel subunit beta-1 (KCNAB1), found in Oryctolagus cuniculus (Rabbit).